The chain runs to 183 residues: Adenine phosphoribosyltransferase (183 aa).

It belongs to the purine/pyrimidine phosphoribosyltransferase family. Homodimer.

The protein localises to the cytoplasm. The catalysed reaction is AMP + diphosphate = 5-phospho-alpha-D-ribose 1-diphosphate + adenine. It functions in the pathway purine metabolism; AMP biosynthesis via salvage pathway; AMP from adenine: step 1/1. In terms of biological role, catalyzes a salvage reaction resulting in the formation of AMP, that is energically less costly than de novo synthesis. The protein is Adenine phosphoribosyltransferase of Klebsiella pneumoniae subsp. pneumoniae (strain ATCC 700721 / MGH 78578).